A 305-amino-acid chain; its full sequence is MTEKLLEIKHLKQHFVTPRGTVKAVDDLSFDIYKGETLGLVGESGCGKSTTGRSIIRLYEATDGEVLFNGENVHGRKSRKKLLEFNRKMQMIFQDPYASLNPRMTVADIIAEGLDIHKLAKTKKERMQRVHELLETVGLNKEHANRYPHEFSGGQRQRIGIARALAVDPEFIIADEPISALDVSIQAQVVNLMKELQKEKGLTYLFIAHDLSMVKYISDRIGVMYFGKLVELAPADELYENPLHPYTKSLLSAIPLPDPDYERNRVRQKYDPSVHQLKDGETMEFREVKPGHFVMCTEAEFKAFS.

Residues 6-251 form the ABC transporter domain; that stretch reads LEIKHLKQHF…PLHPYTKSLL (246 aa). 42–49 lines the ATP pocket; that stretch reads GESGCGKS.

It belongs to the ABC transporter superfamily. As to quaternary structure, the complex is composed of two ATP-binding proteins (OppD and OppF), two transmembrane proteins (OppB and OppC) and a solute-binding protein (OppA).

It is found in the cell membrane. The catalysed reaction is a [peptide](out) + ATP + H2O = a [peptide](in) + ADP + phosphate + H(+). In terms of biological role, part of the ABC transporter complex OppABCDF involved in the uptake of oligopeptides. Probably responsible for energy coupling to the transport system. Required for genetic competence but not for peptide transport or for sporulation. In Bacillus subtilis (strain 168), this protein is Oligopeptide transport ATP-binding protein OppF.